The primary structure comprises 209 residues: MEQQKIPQATAKRLPLYYRFIQNLSLSGKQRVSSAELSEAVKVDSATIRRDFSYFGALGKKGYGYNVNYLLSFFRETLDQDDITRVALIGVGNLGTAFLHYNFTKNNNTKIEMAFDVSEEKVGTEIGGIPVYHLDELEERLSSDIQVAILTVPATVAQSVADRLAETNVHGILNFTPARLNVSDNIRIHHIDLAVELQTLVYFLKNYPQ.

The H-T-H motif DNA-binding region spans 16–55 (LYYRFIQNLSLSGKQRVSSAELSEAVKVDSATIRRDFSYF). 90–95 (GVGNLG) provides a ligand contact to NAD(+).

It belongs to the transcriptional regulatory Rex family. Homodimer.

It is found in the cytoplasm. Functionally, modulates transcription in response to changes in cellular NADH/NAD(+) redox state. This Bacillus anthracis (strain A0248) protein is Redox-sensing transcriptional repressor Rex.